The chain runs to 331 residues: L-lactate dehydrogenase A chain (331 aa).

NAD(+)-binding positions include 29 to 57 (GMVG…MEDK) and arginine 98. Arginine 105, asparagine 137, and arginine 168 together coordinate substrate. Asparagine 137 provides a ligand contact to NAD(+). Residue histidine 192 is the Proton acceptor of the active site. Threonine 247 lines the substrate pocket.

It belongs to the LDH/MDH superfamily. LDH family. In terms of assembly, homotetramer.

The protein localises to the cytoplasm. It catalyses the reaction (S)-lactate + NAD(+) = pyruvate + NADH + H(+). Its pathway is fermentation; pyruvate fermentation to lactate; (S)-lactate from pyruvate: step 1/1. Its function is as follows. Interconverts simultaneously and stereospecifically pyruvate and lactate with concomitant interconversion of NADH and NAD(+). The sequence is that of L-lactate dehydrogenase A chain (ldha) from Patagonotothen tessellata (Black southern cod).